An 861-amino-acid chain; its full sequence is Translation initiation factor IF-2 (861 aa).

2 disordered regions span residues 1–69 (MSDA…GESA) and 92–273 (ARAR…GREK). Positions 53 to 65 (GGPGGKQGGGAKG) are enriched in gly residues. Residues 94-108 (ARAEAADREAQKKQD) show a composition bias toward basic and acidic residues. Residues 109 to 120 (AAAMAQRAASEQ) show a composition bias toward low complexity. Composition is skewed to basic and acidic residues over residues 121–155 (RQLE…KAEA) and 163–186 (DSGR…KRTP). Positions 213-223 (PGPAAKQQPAR) are enriched in low complexity. Positions 255–273 (RAREREKQRRQDTSGGREK) are enriched in basic and acidic residues. The tr-type G domain maps to 357-527 (PRAPVIAVMG…ALQAELLDLK (171 aa)). Residues 366 to 373 (GHVDHGKT) are G1. Position 366–373 (366–373 (GHVDHGKT)) interacts with GTP. The segment at 391-395 (GITQH) is G2. Residues 413 to 416 (DTPG) are G3. Residues 413–417 (DTPGH) and 467–470 (NKCD) each bind GTP. A G4 region spans residues 467 to 470 (NKCD). A G5 region spans residues 503–505 (SAK).

It belongs to the TRAFAC class translation factor GTPase superfamily. Classic translation factor GTPase family. IF-2 subfamily.

Its subcellular location is the cytoplasm. Its function is as follows. One of the essential components for the initiation of protein synthesis. Protects formylmethionyl-tRNA from spontaneous hydrolysis and promotes its binding to the 30S ribosomal subunits. Also involved in the hydrolysis of GTP during the formation of the 70S ribosomal complex. The polypeptide is Translation initiation factor IF-2 (Maricaulis maris (strain MCS10) (Caulobacter maris)).